The chain runs to 553 residues: ATP synthase F(1) complex subunit alpha, mitochondrial (553 aa).

The transit peptide at 1 to 43 (MLSVRVAAAVARALPRRAGLVSKNALGSSFVGARNLHASNTRL) directs the protein to the mitochondrion. Phosphoserine is present on residues Ser-53 and Ser-65. Ser-76 is subject to Phosphoserine; alternate. Ser-76 carries an O-linked (GlcNAc) serine; alternate glycan. Ser-106 is modified (phosphoserine). 3 positions are modified to N6-acetyllysine: Lys-123, Lys-126, and Lys-132. Phosphothreonine is present on Thr-134. Lys-161 is modified (N6-acetyllysine; alternate). Lys-161 is subject to N6-succinyllysine; alternate. Ser-166 bears the Phosphoserine mark. The residue at position 167 (Lys-167) is an N6-acetyllysine; alternate. Lys-167 carries the N6-succinyllysine; alternate modification. Ser-184 is subject to Phosphoserine. At Arg-204 the chain carries Omega-N-methylarginine. ATP is bound by residues Gln-215, Gly-217, Lys-218, Thr-219, and Ser-220. Thr-219 is a Mg(2+) binding site. Residues Lys-230 and Lys-239 each carry the N6-acetyllysine; alternate modification. An N6-succinyllysine; alternate mark is found at Lys-230 and Lys-239. N6-acetyllysine is present on Lys-240. N6-acetyllysine; alternate is present on residues Lys-261 and Lys-305. Lys-261 and Lys-305 each carry N6-succinyllysine; alternate. Asp-312 serves as a coordination point for Mg(2+). N6-acetyllysine; alternate is present on Lys-427. Lys-427 is subject to N6-succinyllysine; alternate. Lys-434 carries the post-translational modification N6-acetyllysine. 2 residues coordinate ATP: Gln-473 and Gln-475. An N6-acetyllysine; alternate mark is found at Lys-498 and Lys-506. An N6-succinyllysine; alternate mark is found at Lys-498 and Lys-506. A Phosphoserine modification is found at Ser-521. N6-acetyllysine; alternate is present on residues Lys-531 and Lys-539. An N6-succinyllysine; alternate mark is found at Lys-531 and Lys-539. The residue at position 541 (Lys-541) is an N6-acetyllysine.

Belongs to the ATPase alpha/beta chains family. As to quaternary structure, homotrimer. Component of the ATP synthase complex composed at least of ATP5F1A/subunit alpha, ATP5F1B/subunit beta, ATP5MC1/subunit c (homooctomer), MT-ATP6/subunit a, MT-ATP8/subunit 8, ATP5ME/subunit e, ATP5MF/subunit f, ATP5MG/subunit g, ATP5MK/subunit k, ATP5MJ/subunit j, ATP5F1C/subunit gamma, ATP5F1D/subunit delta, ATP5F1E/subunit epsilon, ATP5PF/subunit F6, ATP5PB/subunit b, ATP5PD/subunit d, ATP5PO/subunit OSCP. ATP synthase complex consists of a soluble F(1) head domain (subunits alpha(3) and beta(3)) - the catalytic core - and a membrane F(0) domain - the membrane proton channel (subunits c, a, 8, e, f, g, k and j). These two domains are linked by a central stalk (subunits gamma, delta, and epsilon) rotating inside the F1 region and a stationary peripheral stalk (subunits F6, b, d, and OSCP). Interacts with ATPAF2. Interacts with HRG; the interaction occurs on the surface of T-cells and alters the cell morphology when associated with concanavalin (in vitro). Interacts with PLG (angiostatin peptide); the interaction inhibits most of the angiogenic properties of angiostatin. Interacts with BLOC1S1. Interacts with BCL2L1 isoform BCL-X(L); the interaction mediates the association of BCL2L1 isoform BCL-X(L) with the mitochondrial membrane F(1)F(0) ATP synthase and enhances neurons metabolic efficiency. Interacts with CLN5 and PPT1. Interacts with S100A1; this interaction increases F1-ATPase activity. Interacts with ABCB7; this interaction allows the regulation of cellular iron homeostasis and cellular reactive oxygen species (ROS) levels in cardiomyocytes. In terms of processing, acetylated on lysine residues. BLOC1S1 is required for acetylation. Acetylation of Lys-132, Lys-230 and Lys-498 is observed in liver mitochondria from fasted mice but not from fed mice.

The protein resides in the mitochondrion inner membrane. It is found in the cell membrane. Subunit alpha, of the mitochondrial membrane ATP synthase complex (F(1)F(0) ATP synthase or Complex V) that produces ATP from ADP in the presence of a proton gradient across the membrane which is generated by electron transport complexes of the respiratory chain. ATP synthase complex consist of a soluble F(1) head domain - the catalytic core - and a membrane F(1) domain - the membrane proton channel. These two domains are linked by a central stalk rotating inside the F(1) region and a stationary peripheral stalk. During catalysis, ATP synthesis in the catalytic domain of F(1) is coupled via a rotary mechanism of the central stalk subunits to proton translocation. In vivo, can only synthesize ATP although its ATP hydrolase activity can be activated artificially in vitro. With the catalytic subunit beta (ATP5F1B), forms the catalytic core in the F(1) domain. Subunit alpha does not bear the catalytic high-affinity ATP-binding sites. This chain is ATP synthase F(1) complex subunit alpha, mitochondrial, found in Mus musculus (Mouse).